A 483-amino-acid chain; its full sequence is Probable glycosyltransferase 6 (483 aa).

Residues 1-40 (MAASETAPFGVSAASKGGGGVAGARAQHGQLAVAGRVHDA) lie on the Cytoplasmic side of the membrane. A helical; Signal-anchor for type II membrane protein transmembrane segment spans residues 41–61 (LVFAAGAVAAVLVLLATASFL). Residues 62-483 (SPMPVTNLVA…PLPFDYPAAR (422 aa)) are Lumenal-facing. Asn144 carries an N-linked (GlcNAc...) asparagine glycan.

Belongs to the glycosyltransferase 34 family.

The protein localises to the golgi apparatus membrane. Probable glycosyltransferase that may be involved in the biosynthesis of xyloglucan. In Oryza sativa subsp. indica (Rice), this protein is Probable glycosyltransferase 6.